The sequence spans 691 residues: Choline transporter-like 1 (691 aa).

A compositionally biased stretch (basic and acidic residues) spans M1–E10. The interval M1 to Y20 is disordered. Transmembrane regions (helical) follow at residues W28–V48, W205–M225, and I232–L252. Residue N261 is glycosylated (N-linked (GlcNAc...) asparagine). 2 consecutive transmembrane segments (helical) span residues V282–F302 and L332–L352. N385 carries N-linked (GlcNAc...) asparagine glycosylation. 4 helical membrane-spanning segments follow: residues S408–Q428, V527–A547, F562–L582, and F591–L611.

It belongs to the CTL (choline transporter-like) family.

The protein resides in the membrane. The chain is Choline transporter-like 1 from Drosophila melanogaster (Fruit fly).